The chain runs to 245 residues: MKHVGPVEPAAGGPEVPPVAALGAAPESAAALFGPRLATAQRYAEVLGTAGVERGLLGPREVDRIWDRHILNSAAVAGLLGRGDRIIDIGSGAGLPGIPLAIARPDLEVVLLEPLLRRSEFLTEVVDELGLAVEVVRGRAEERPVRNRFGDRDAAVSRAVAALDKLTKWSMPLLRHDGRMLAIKGERAAEEVDRYRRVMTASGAADVRVVTCGANYLRPPATVVSARRAKPPHPKSARTGKAGTR.

S-adenosyl-L-methionine contacts are provided by residues Gly-90, Leu-95, 140–141 (AE), and Arg-158. A disordered region spans residues 223–245 (VVSARRAKPPHPKSARTGKAGTR). Basic residues predominate over residues 227–245 (RRAKPPHPKSARTGKAGTR).

It belongs to the methyltransferase superfamily. RNA methyltransferase RsmG family.

It is found in the cytoplasm. Functionally, specifically methylates the N7 position of guanine in position 518 of 16S rRNA. In Mycobacterium avium (strain 104), this protein is Ribosomal RNA small subunit methyltransferase G.